The chain runs to 1216 residues: RAB11-binding protein RELCH (1216 aa).

Gly residues predominate over residues Met-1–Ser-13. Disordered stretches follow at residues Met-1 to Ala-67 and Asn-133 to Gly-179. Ala-2 carries the post-translational modification N-acetylalanine. Phosphoserine is present on residues Ser-20 and Ser-22. Residues Asp-21–Ala-31 show a composition bias toward acidic residues. Thr-32 is subject to Phosphothreonine. A phosphoserine mark is found at Ser-54 and Ser-56. Low complexity predominate over residues Gly-142–Gly-154. Phosphoserine is present on residues Ser-180 and Ser-182. Position 183 is a phosphothreonine (Thr-183). Phosphoserine is present on Ser-186. Residues Asn-197–His-231 adopt a coiled-coil conformation. In terms of domain architecture, LisH spans Glu-255–Asp-287. A coiled-coil region spans residues Leu-358 to Thr-397. The residue at position 385 (Ser-385) is a Phosphoserine. Residues Val-409–Lys-473 form a disordered region. The span at Asp-429–Ile-440 shows a compositional bias: basic and acidic residues. Ser-453 bears the Phosphoserine mark. Residues Cys-497–Val-779 form an interaction with RAB11A and RAB11B region. HEAT repeat units lie at residues Leu-601–Leu-639 and Val-640–Gln-679. A Phosphoserine modification is found at Ser-792. An HEAT 3 repeat occupies Val-1004–Arg-1042. Ser-1149 is modified (phosphoserine).

Interacts with RAB11A (VIA-GTP form). Interacts with RAB11B. Interacts (via the third HEAT repeat) with OSBP (via C-terminus). Found in a complex composed of RELCH, OSBP1 and RAB11A.

The protein localises to the recycling endosome. Its subcellular location is the golgi apparatus. It localises to the trans-Golgi network. Its function is as follows. Regulates intracellular cholesterol distribution from recycling endosomes to the trans-Golgi network through interactions with RAB11 and OSBP. Functions in membrane tethering and promotes OSBP-mediated cholesterol transfer between RAB11-bound recycling endosomes and OSBP-bound Golgi-like membranes. The chain is RAB11-binding protein RELCH (Relch) from Mus musculus (Mouse).